The primary structure comprises 85 residues: Small ribosomal subunit protein uS17 (85 aa).

The protein belongs to the universal ribosomal protein uS17 family. As to quaternary structure, part of the 30S ribosomal subunit.

Functionally, one of the primary rRNA binding proteins, it binds specifically to the 5'-end of 16S ribosomal RNA. The chain is Small ribosomal subunit protein uS17 from Trichlorobacter lovleyi (strain ATCC BAA-1151 / DSM 17278 / SZ) (Geobacter lovleyi).